A 640-amino-acid chain; its full sequence is Chaperone protein DnaK (640 aa).

Thr198 bears the Phosphothreonine; by autocatalysis mark. The interval 600–640 is disordered; that stretch reads KTQGAGAEGSEQPHGEQEAGGAAKGETVVDADFEEVKDDKK. The segment covering 628-640 has biased composition (acidic residues); that stretch reads VDADFEEVKDDKK.

This sequence belongs to the heat shock protein 70 family.

Its function is as follows. Acts as a chaperone. The polypeptide is Chaperone protein DnaK (Geobacter sp. (strain M21)).